The primary structure comprises 303 residues: Coenzyme PQQ synthesis protein B (303 aa).

Belongs to the PqqB family.

It participates in cofactor biosynthesis; pyrroloquinoline quinone biosynthesis. May be involved in the transport of PQQ or its precursor to the periplasm. The protein is Coenzyme PQQ synthesis protein B of Pseudomonas putida (strain ATCC 47054 / DSM 6125 / CFBP 8728 / NCIMB 11950 / KT2440).